We begin with the raw amino-acid sequence, 143 residues long: Root meristem growth factor 10 (143 aa).

The N-terminal stretch at 1-27 is a signal peptide; it reads MDMLRSACFYFLLIVFVILSWSLLCDS. Positions 28-130 are excised as a propeptide; sequence RHLGHMEKKL…SDQEHPGFNL (103 aa). Residue asparagine 60 is glycosylated (N-linked (GlcNAc...) asparagine). The span at 74-83 shows a compositional bias: polar residues; it reads NHGDNGQING. Residues 74-143 are disordered; sequence NHGDNGQING…QPTTHPPHHN (70 aa). Residues 92–99 carry the Nuclear localization signal motif; that stretch reads VKRASDKK. The residue at position 132 (tyrosine 132) is a Sulfotyrosine. A Hydroxyproline modification is found at proline 140.

This sequence belongs to the RGF family. In terms of assembly, binds to LRR receptor-like serine/threonine-protein kinases RGI1, RGI2 and RGI3 to trigger their dimerization with SERK proteins and subsequent signaling. Post-translationally, the tyrosine sulfation is critical for the function of the peptide. As to expression, expressed in root tips.

Its subcellular location is the secreted. The protein resides in the nucleus. In terms of biological role, maintains the postembryonic root stem cell niche by regulating the expression levels and patterns of the transcription factor PLETHORA (PLT), mainly at the post-transcriptional level. Promotes root elongation. In Arabidopsis thaliana (Mouse-ear cress), this protein is Root meristem growth factor 10.